The primary structure comprises 305 residues: Protoheme IX farnesyltransferase (305 aa).

9 helical membrane-spanning segments follow: residues 28–48 (VVLLMLLTAIVGMCLASPGIV), 52–72 (VFLFGNLGIALAASSAAAINH), 102–122 (IFAAILCILSMIILIAFVNLL), 123–143 (TALLTFITLIGYAGFYTLYLK), 150–170 (IVIGGLAGAAPPLLGWVAVTG), 176–196 (ALILLLIIFLWTPPHFWALAI), 221–241 (INILLYTLLLTAISFLPFVIM), 243–263 (SGWIYFSSVCLLNLGFLYWAI), and 282–302 (IWYLMLLFTALLVDHYVYLAL).

Belongs to the UbiA prenyltransferase family. Protoheme IX farnesyltransferase subfamily.

Its subcellular location is the cell inner membrane. It carries out the reaction heme b + (2E,6E)-farnesyl diphosphate + H2O = Fe(II)-heme o + diphosphate. It participates in porphyrin-containing compound metabolism; heme O biosynthesis; heme O from protoheme: step 1/1. Functionally, converts heme B (protoheme IX) to heme O by substitution of the vinyl group on carbon 2 of heme B porphyrin ring with a hydroxyethyl farnesyl side group. This chain is Protoheme IX farnesyltransferase, found in Coxiella burnetii (strain CbuK_Q154) (Coxiella burnetii (strain Q154)).